A 176-amino-acid polypeptide reads, in one-letter code: Disulfide bond formation protein B (176 aa).

Over 1–14 the chain is Cytoplasmic; that stretch reads MLRFLNQCSQGRGA. Residues 15-31 traverse the membrane as a helical segment; sequence WLLMAFTALALELTALW. Residues 32–49 lie on the Periplasmic side of the membrane; sequence FQHVMLLKPCVLCIYERC. A disulfide bridge links Cys-41 with Cys-44. A helical transmembrane segment spans residues 50 to 65; that stretch reads ALFGVLGAALIGAIAP. Over 66–71 the chain is Cytoplasmic; it reads KTPLRY. The helical transmembrane segment at 72–89 threads the bilayer; it reads VAMVIWLYSAFRGVQLTY. Residues 90–144 lie on the Periplasmic side of the membrane; that stretch reads EHTMLQLYPSPFATCDFMVRFPEWLPLDKWVPQVFVASGDCAERQWDFLGLEMPQ. Cys-104 and Cys-130 are disulfide-bonded. Residues 145 to 163 form a helical membrane-spanning segment; that stretch reads WLLGIFIAYLIVAVLVMIS. Residues 164–176 lie on the Cytoplasmic side of the membrane; it reads QPFKAKKRDLFGR.

It belongs to the DsbB family.

It is found in the cell inner membrane. Required for disulfide bond formation in some periplasmic proteins. Acts by oxidizing the DsbA protein. The sequence is that of Disulfide bond formation protein B from Shigella sonnei (strain Ss046).